A 147-amino-acid polypeptide reads, in one-letter code: Ribonuclease H (147 aa).

Residues 5–141 (ARKQITLYSD…CDELARNEAE (137 aa)) form the RNase H type-1 domain. Mg(2+)-binding residues include D14, E52, D74, and D133.

Belongs to the RNase H family. In terms of assembly, monomer. It depends on Mg(2+) as a cofactor.

The protein resides in the cytoplasm. It carries out the reaction Endonucleolytic cleavage to 5'-phosphomonoester.. Functionally, endonuclease that specifically degrades the RNA of RNA-DNA hybrids. This chain is Ribonuclease H, found in Sulfurovum sp. (strain NBC37-1).